A 243-amino-acid polypeptide reads, in one-letter code: UPF0173 metal-dependent hydrolase Xaut_3786 (243 aa).

It belongs to the UPF0173 family.

The sequence is that of UPF0173 metal-dependent hydrolase Xaut_3786 from Xanthobacter autotrophicus (strain ATCC BAA-1158 / Py2).